The following is a 137-amino-acid chain: MSGSGASGNKFRMSLALPVGAVMNCADNSGARNLYVLAVKGTGARLNRLPAAAAGDMVMATVKKGKPELRKKVMPAIVIRQSKPWRRRDGVYLYFEDNAGVIVNPKGEMKGSAITGPVAKECADLWPRIASNSGVVV.

It belongs to the universal ribosomal protein uL14 family. As to quaternary structure, component of the large ribosomal subunit. Mature ribosomes consist of a small (40S) and a large (60S) subunit. The 40S subunit contains about 32 different proteins and 1 molecule of RNA (18S). The 60S subunit contains 45 different proteins and 3 molecules of RNA (25S, 5.8S and 5S).

It is found in the cytoplasm. Functionally, component of the ribosome, a large ribonucleoprotein complex responsible for the synthesis of proteins in the cell. The small ribosomal subunit (SSU) binds messenger RNAs (mRNAs) and translates the encoded message by selecting cognate aminoacyl-transfer RNA (tRNA) molecules. The large subunit (LSU) contains the ribosomal catalytic site termed the peptidyl transferase center (PTC), which catalyzes the formation of peptide bonds, thereby polymerizing the amino acids delivered by tRNAs into a polypeptide chain. The nascent polypeptides leave the ribosome through a tunnel in the LSU and interact with protein factors that function in enzymatic processing, targeting, and the membrane insertion of nascent chains at the exit of the ribosomal tunnel. The sequence is that of Large ribosomal subunit protein uL14 from Candida albicans (strain SC5314 / ATCC MYA-2876) (Yeast).